Consider the following 645-residue polypeptide: 1,4-alpha-glucan branching enzyme GlgB (645 aa).

Asp309 acts as the Nucleophile in catalysis. Glu352 serves as the catalytic Proton donor. The disordered stretch occupies residues 619-645; sequence VKTRKGSKKQDGSKTKVRSNVTSRGKR. A compositionally biased stretch (polar residues) spans 636-645; the sequence is RSNVTSRGKR.

This sequence belongs to the glycosyl hydrolase 13 family. GlgB subfamily. As to quaternary structure, monomer.

It carries out the reaction Transfers a segment of a (1-&gt;4)-alpha-D-glucan chain to a primary hydroxy group in a similar glucan chain.. The protein operates within glycan biosynthesis; glycogen biosynthesis. Its function is as follows. Catalyzes the formation of the alpha-1,6-glucosidic linkages in glycogen by scission of a 1,4-alpha-linked oligosaccharide from growing alpha-1,4-glucan chains and the subsequent attachment of the oligosaccharide to the alpha-1,6 position. The sequence is that of 1,4-alpha-glucan branching enzyme GlgB from Bacillus anthracis (strain CDC 684 / NRRL 3495).